The following is a 141-amino-acid chain: Galactose-6-phosphate isomerase subunit LacA (141 aa).

Belongs to the LacAB/RpiB family. Heteromultimeric protein consisting of LacA and LacB.

The enzyme catalyses aldehydo-D-galactose 6-phosphate = keto-D-tagatose 6-phosphate. The protein operates within carbohydrate metabolism; D-galactose 6-phosphate degradation; D-tagatose 6-phosphate from D-galactose 6-phosphate: step 1/1. The polypeptide is Galactose-6-phosphate isomerase subunit LacA (Streptococcus agalactiae serotype Ia (strain ATCC 27591 / A909 / CDC SS700)).